The following is a 289-amino-acid chain: Protease HtpX homolog (289 aa).

Transmembrane regions (helical) follow at residues Leu8–Gly28 and Ser29–Gln49. Position 132 (His132) interacts with Zn(2+). The active site involves Glu133. His136 provides a ligand contact to Zn(2+). The next 2 membrane-spanning stretches (helical) occupy residues Val151–Ile171 and Leu183–Ile203. Zn(2+) is bound at residue Glu208.

This sequence belongs to the peptidase M48B family. Requires Zn(2+) as cofactor.

It is found in the cell inner membrane. This is Protease HtpX homolog from Trichormus variabilis (strain ATCC 29413 / PCC 7937) (Anabaena variabilis).